The chain runs to 141 residues: Large ribosomal subunit protein uL16 (141 aa).

This sequence belongs to the universal ribosomal protein uL16 family. As to quaternary structure, part of the 50S ribosomal subunit.

Binds 23S rRNA and is also seen to make contacts with the A and possibly P site tRNAs. The polypeptide is Large ribosomal subunit protein uL16 (Nostoc punctiforme (strain ATCC 29133 / PCC 73102)).